A 962-amino-acid chain; its full sequence is UBP9-binding protein bun107 (962 aa).

6 WD repeats span residues 25-69, 77-116, 121-162, 172-211, 214-253, and 302-339; these read DANC…GKAS, AHSAWVNDIALTHDSEGVISCSSDSTVKLWKPHVLNASCL, EHTD…EVMR, VVGPRSGVYSLAANNNIIANGGLQKDIQLWDCVSKKRITD, GHTDNVRDILISDDGRTILTASSDATIKLWSLRAQKCLFS, and KQDAPVSDIVARQSFIWSTSRDGSILRWKDEPLFNQDV. Low complexity predominate over residues 568-578; sequence SPLRIRSRPSP. Disordered stretches follow at residues 568 to 615 and 702 to 758; these read SPLR…QIPS and RAAS…PREL. The span at 707-723 shows a compositional bias: polar residues; sequence RVFSTGTSVTSPQALSK. Phosphoserine is present on Ser717. Over residues 724 to 738 the composition is skewed to low complexity; the sequence is TNNTVNNAANTENNT.

As to quaternary structure, interacts with ubp9 and bun62.

Its subcellular location is the cytoplasm. The protein resides in the cell tip. Required for the ubp9 recruitment to septa and cell tips but also for its enzymatic activity at these specific locations. This is UBP9-binding protein bun107 (bun107) from Schizosaccharomyces pombe (strain 972 / ATCC 24843) (Fission yeast).